We begin with the raw amino-acid sequence, 168 residues long: Small ribosomal subunit protein uS8 (168 aa).

Residues 59-93 form a not found in other S8 sequences region; it reads EEYKKMKELAEKSPNPKMKRYLKQLEEYNKGTQYP.

Belongs to the universal ribosomal protein uS8 family. In terms of assembly, part of the 30S ribosomal subunit. Contacts proteins S5 and S12.

Functionally, one of the primary rRNA binding proteins, it binds directly to 16S rRNA central domain where it helps coordinate assembly of the platform of the 30S subunit. This Aquifex aeolicus (strain VF5) protein is Small ribosomal subunit protein uS8.